The chain runs to 188 residues: Elongation factor P (188 aa).

It belongs to the elongation factor P family.

It is found in the cytoplasm. It participates in protein biosynthesis; polypeptide chain elongation. Functionally, involved in peptide bond synthesis. Stimulates efficient translation and peptide-bond synthesis on native or reconstituted 70S ribosomes in vitro. Probably functions indirectly by altering the affinity of the ribosome for aminoacyl-tRNA, thus increasing their reactivity as acceptors for peptidyl transferase. The sequence is that of Elongation factor P (efp) from Rickettsia conorii (strain ATCC VR-613 / Malish 7).